A 351-amino-acid chain; its full sequence is Peptide chain release factor 1 (351 aa).

Gln-233 bears the N5-methylglutamine mark.

Belongs to the prokaryotic/mitochondrial release factor family. Post-translationally, methylated by PrmC. Methylation increases the termination efficiency of RF1.

It is found in the cytoplasm. In terms of biological role, peptide chain release factor 1 directs the termination of translation in response to the peptide chain termination codons UAG and UAA. In Treponema pallidum (strain Nichols), this protein is Peptide chain release factor 1 (prfA).